The primary structure comprises 201 residues: 8-oxoguanine DNA glycosylase/AP lyase (201 aa).

Catalysis depends on residues Lys126 and Asp144.

This sequence belongs to the type-2 OGG1 family.

It carries out the reaction 2'-deoxyribonucleotide-(2'-deoxyribose 5'-phosphate)-2'-deoxyribonucleotide-DNA = a 3'-end 2'-deoxyribonucleotide-(2,3-dehydro-2,3-deoxyribose 5'-phosphate)-DNA + a 5'-end 5'-phospho-2'-deoxyribonucleoside-DNA + H(+). In terms of biological role, catalyzes the excision of an oxidatively damaged form of guanine (7,8-dihydro-8-oxoguanine = 8-oxoG) from DNA. Also cleaves the DNA backbone at apurinic/apyrimidinic sites (AP sites). The protein is 8-oxoguanine DNA glycosylase/AP lyase of Metallosphaera sedula (strain ATCC 51363 / DSM 5348 / JCM 9185 / NBRC 15509 / TH2).